The primary structure comprises 570 residues: Hydroxylamine reductase (570 aa).

[4Fe-4S] cluster contacts are provided by C5, C8, C17, and C23. The hybrid [4Fe-2O-2S] cluster site is built by H266, E290, C334, C425, C453, C478, E513, and K515. At C425 the chain carries Cysteine persulfide.

It belongs to the HCP family. The cofactor is [4Fe-4S] cluster. Hybrid [4Fe-2O-2S] cluster is required as a cofactor.

Its subcellular location is the cytoplasm. It carries out the reaction A + NH4(+) + H2O = hydroxylamine + AH2 + H(+). Functionally, catalyzes the reduction of hydroxylamine to form NH(3) and H(2)O. This Clostridium botulinum (strain Okra / Type B1) protein is Hydroxylamine reductase.